The chain runs to 248 residues: 2,3-dihydro-2,3-dihydroxybenzoate dehydrogenase (248 aa).

NAD(+) is bound at residue 9-33; that stretch reads WVTGAGKGIGYATALAFVEAGAKVT. Ser-131 lines the substrate pocket. Catalysis depends on Tyr-144, which acts as the Proton acceptor.

The protein belongs to the short-chain dehydrogenases/reductases (SDR) family. Homotetramer; dimer of dimers. EntA and EntE interact together.

It carries out the reaction (2S,3S)-2,3-dihydroxy-2,3-dihydrobenzoate + NAD(+) = 2,3-dihydroxybenzoate + NADH + H(+). Its pathway is siderophore biosynthesis; enterobactin biosynthesis. Inhibited by cis-2-hydroxy-3-cyclohexen-1-carboxylate, cis-2-hydroxycyclohexane-1-carboxylate and trans-2-hydroxycyclohexane-1-carboxylate. Its function is as follows. Involved in the biosynthesis of the siderophore enterobactin (enterochelin), which is a macrocyclic trimeric lactone of N-(2,3-dihydroxybenzoyl)-serine. Catalyzes the reversible NAD-dependent oxidation of the C3-hydroxyl group of 2,3-dihydro-2,3-dihydroxybenzoate (2,3-diDHB), producing the transient intermediate 2-hydroxy-3-oxo-4,6-cyclohexadiene-1-carboxylate, which undergoes rapid aromatization to the final product, 2,3-dihydroxybenzoate (2,3-DHB). Only the compounds with a C3-hydroxyl group such as methyl 2,3-dihydro-2,3-dihydroxybenzoate, methyl-3-hydroxy-1,4-cyclohexadiene-1-carboxylate, trans-3-hydroxy-2-cyclohexene-1-carboxylate, cis-3-hydroxy-4-cyclohexene-1-carboxylate, cis-3-hydroxycyclohexane-1-carboxylic acid are oxidized to the corresponding ketone products. The stereospecificity of the C3 allylic alcohol group oxidation is 3R in a 1R,3R dihydro substrate. It can also increase the DHB-AMP ligase activity of EntE by interaction EntE. This chain is 2,3-dihydro-2,3-dihydroxybenzoate dehydrogenase, found in Escherichia coli (strain K12).